We begin with the raw amino-acid sequence, 145 residues long: LIM domain only protein 3 (145 aa).

LIM zinc-binding domains follow at residues 11–73 (KGCA…LFGV) and 75–137 (GNCA…GLMK).

The polypeptide is LIM domain only protein 3 (Danio rerio (Zebrafish)).